The chain runs to 757 residues: 5-methyltetrahydropteroyltriglutamate--homocysteine methyltransferase (757 aa).

Residues 16-19 (RELK) and Lys-112 contribute to the 5-methyltetrahydropteroyltri-L-glutamate site. L-homocysteine is bound by residues 433–435 (IGS) and Glu-486. Residues 433–435 (IGS) and Glu-486 contribute to the L-methionine site. Residues 517-518 (RC) and Trp-563 each bind 5-methyltetrahydropteroyltri-L-glutamate. An L-homocysteine-binding site is contributed by Asp-601. An L-methionine-binding site is contributed by Asp-601. Glu-607 serves as a coordination point for 5-methyltetrahydropteroyltri-L-glutamate. Residues His-643, Cys-645, and Glu-667 each contribute to the Zn(2+) site. His-696 (proton donor) is an active-site residue. A Zn(2+)-binding site is contributed by Cys-728.

It belongs to the vitamin-B12 independent methionine synthase family. The cofactor is Zn(2+).

It catalyses the reaction 5-methyltetrahydropteroyltri-L-glutamate + L-homocysteine = tetrahydropteroyltri-L-glutamate + L-methionine. The protein operates within amino-acid biosynthesis; L-methionine biosynthesis via de novo pathway; L-methionine from L-homocysteine (MetE route): step 1/1. Functionally, catalyzes the transfer of a methyl group from 5-methyltetrahydrofolate to homocysteine resulting in methionine formation. This is 5-methyltetrahydropteroyltriglutamate--homocysteine methyltransferase from Pasteurella multocida (strain Pm70).